The following is a 406-amino-acid chain: MSGCPFMAKKHHFTFSELSLEDKHEDNSQEGLNKASKGGLIYGDYLQLDKVLNAQELQSEKKGNKIHDEHLFIVTHQAYELWFKQILWELDSVREIFQNGHVRDERNMLKVVARIHRISMILKLLVEQFSVLETMTAMDFFDFRDYLSPASGFQSLQFRLLENKIGVPEILRVPYNRRHYRDNFKGETNELLLRSEQEPTLLGLVEAWLERTPGLEEEGFHFWGKLEVNIFRALEEELQAAKTKPDSEDKEEHLAELQKQKELFGALFDERRHEHLLSKGERRLSYKALKGALMINFYREEPRFQVPFQLLTSLMEIDTLMTKWRYNHVCMVHRMIGSKAGTGGSSGYQYLRSTVSDRYKVFVDLFNLSTYLVPRHWVPRLNPSIHKFLYTAECCDSSYFSSDDSD.

Residues 72 to 76 and R144 contribute to the substrate site; that span reads FIVTH. H328 is a binding site for heme. Substrate is bound at residue T342.

This sequence belongs to the tryptophan 2,3-dioxygenase family. In terms of assembly, homotetramer. Dimer of dimers. The cofactor is heme.

It catalyses the reaction L-tryptophan + O2 = N-formyl-L-kynurenine. Its pathway is amino-acid degradation; L-tryptophan degradation via kynurenine pathway; L-kynurenine from L-tryptophan: step 1/2. Heme-dependent dioxygenase that catalyzes the oxidative cleavage of the L-tryptophan (L-Trp) pyrrole ring and converts L-tryptophan to N-formyl-L-kynurenine. Catalyzes the oxidative cleavage of the indole moiety. In Xenopus laevis (African clawed frog), this protein is Tryptophan 2,3-dioxygenase.